The primary structure comprises 535 residues: Thermosome subunit gamma (535 aa).

Belongs to the TCP-1 chaperonin family. In terms of assembly, forms a heterooligomeric complex of two stacked nine-membered rings; one of alpha and the other of beta subunits.

It localises to the cytoplasm. The enzyme catalyses ATP + H2O = ADP + phosphate + H(+). Molecular chaperone; binds unfolded polypeptides in vitro, and has a weak ATPase activity. This is Thermosome subunit gamma (thsC) from Saccharolobus shibatae (strain ATCC 51178 / DSM 5389 / JCM 8931 / NBRC 15437 / B12) (Sulfolobus shibatae).